Reading from the N-terminus, the 49-residue chain is U3-plectoxin-Pt1a (49 aa).

Disulfide bonds link Cys2-Cys16, Cys9-Cys30, Cys15-Cys41, Cys32-Cys39, and Cys45-Cys49.

In terms of tissue distribution, expressed by the venom gland.

Its subcellular location is the secreted. Functionally, potent toxin that may paralyze and/or kill insect pests such as H.virescens (lepidoptera), S.exigua (beet armyworm) and M.sexta (tobacco hornworm). This is U3-plectoxin-Pt1a from Plectreurys tristis (Spider).